Reading from the N-terminus, the 34-residue chain is MKTRPKKAGQQKKTESKAIDSLDKKLGGPNRPST.

Basic residues predominate over residues 1–10 (MKTRPKKAGQ). A disordered region spans residues 1–34 (MKTRPKKAGQQKKTESKAIDSLDKKLGGPNRPST). The segment covering 12-26 (KKTESKAIDSLDKKL) has biased composition (basic and acidic residues).

It localises to the spore core. The sequence is that of Small, acid-soluble spore protein M (sspM) from Bacillus subtilis (strain 168).